We begin with the raw amino-acid sequence, 268 residues long: Protein APE_1980.1 (268 aa).

The protein belongs to the CinA family.

The chain is Protein APE_1980.1 from Aeropyrum pernix (strain ATCC 700893 / DSM 11879 / JCM 9820 / NBRC 100138 / K1).